The primary structure comprises 115 residues: Tyrosine-protein phosphatase 21 (115 aa).

The 115-residue stretch at 1 to 115 (WLMIVEKECR…EIGGDAPMVV (115 aa)) folds into the Tyrosine-protein phosphatase domain. D83 contacts substrate.

The protein belongs to the protein-tyrosine phosphatase family.

The enzyme catalyses O-phospho-L-tyrosyl-[protein] + H2O = L-tyrosyl-[protein] + phosphate. This Styela plicata (Wrinkled sea squirt) protein is Tyrosine-protein phosphatase 21 (STY-21).